Consider the following 158-residue polypeptide: Large ribosomal subunit protein uL15 (158 aa).

Residues 1–13 (MKLNEIKDNEGST) are compositionally biased toward basic and acidic residues. Positions 1–45 (MKLNEIKDNEGSTHSRKRLGRGIGSGSGKTGGRGVKGQKSRSGVA) are disordered. Residues 21-35 (RGIGSGSGKTGGRGV) are compositionally biased toward gly residues.

This sequence belongs to the universal ribosomal protein uL15 family. Part of the 50S ribosomal subunit.

Functionally, binds to the 23S rRNA. This is Large ribosomal subunit protein uL15 from Rhizobium leguminosarum bv. trifolii (strain WSM2304).